We begin with the raw amino-acid sequence, 458 residues long: Argininosuccinate lyase (458 aa).

The protein belongs to the lyase 1 family. Argininosuccinate lyase subfamily.

It localises to the cytoplasm. It catalyses the reaction 2-(N(omega)-L-arginino)succinate = fumarate + L-arginine. It participates in amino-acid biosynthesis; L-arginine biosynthesis; L-arginine from L-ornithine and carbamoyl phosphate: step 3/3. In Buchnera aphidicola subsp. Baizongia pistaciae (strain Bp), this protein is Argininosuccinate lyase.